Consider the following 355-residue polypeptide: Histidinol-phosphate aminotransferase (355 aa).

The residue at position 211 (Lys211) is an N6-(pyridoxal phosphate)lysine.

The protein belongs to the class-II pyridoxal-phosphate-dependent aminotransferase family. Histidinol-phosphate aminotransferase subfamily. Homodimer. Pyridoxal 5'-phosphate serves as cofactor.

It catalyses the reaction L-histidinol phosphate + 2-oxoglutarate = 3-(imidazol-4-yl)-2-oxopropyl phosphate + L-glutamate. It functions in the pathway amino-acid biosynthesis; L-histidine biosynthesis; L-histidine from 5-phospho-alpha-D-ribose 1-diphosphate: step 7/9. This is Histidinol-phosphate aminotransferase from Aeromonas salmonicida (strain A449).